Consider the following 246-residue polypeptide: Probable ABC transporter permease protein BMEII0107 (246 aa).

Transmembrane regions (helical) follow at residues 12-32 (LLSF…GAVV), 63-83 (VLSG…LMGW), 94-114 (WVQF…IVTL), 122-142 (IFVI…QGVI), 172-192 (VPFI…TVVA), and 211-231 (LYYD…LGLF). Residues 56-236 (IFASLRRVLS…ILGLFMDRLL (181 aa)) enclose the ABC transmembrane type-1 domain.

The protein belongs to the binding-protein-dependent transport system permease family. In terms of assembly, the complex is composed of two ATP-binding proteins (BMEII0108), two transmembrane proteins (BMEII0107) and a solute-binding protein (BMEII0109).

It is found in the cell inner membrane. Probably part of an ABC transporter complex. Probably responsible for the translocation of the substrate across the membrane. This is Probable ABC transporter permease protein BMEII0107 from Brucella melitensis biotype 1 (strain ATCC 23456 / CCUG 17765 / NCTC 10094 / 16M).